We begin with the raw amino-acid sequence, 73 residues long: Large ribosomal subunit protein bL31 (73 aa).

This sequence belongs to the bacterial ribosomal protein bL31 family. Type A subfamily. Part of the 50S ribosomal subunit.

Its function is as follows. Binds the 23S rRNA. In Rhizobium etli (strain CIAT 652), this protein is Large ribosomal subunit protein bL31.